The chain runs to 185 residues: Homeobox-leucine zipper protein ATHB-22 (185 aa).

Positions 76-135 form a DNA-binding region, homeobox; the sequence is TSEQLKFLERSFQEEIKLNPDRKMKLNPDRKMKLSKELGLQPRQIAVWFQNRKARWKNKQ. Residues 136–164 form a leucine-zipper region; it reads LEHLYESLRQEFDIVSREKELLQEELIQL.

This sequence belongs to the HD-ZIP homeobox family. Class I subfamily. Expressed in siliques.

The protein localises to the nucleus. Functionally, probable transcription factor. This Arabidopsis thaliana (Mouse-ear cress) protein is Homeobox-leucine zipper protein ATHB-22 (ATHB-22).